Reading from the N-terminus, the 165-residue chain is Transcription antitermination protein NusB (165 aa).

The tract at residues 1–27 (MISDDTDQFNPRDAKSPEAAKGKSAKR) is disordered. Over residues 10–21 (NPRDAKSPEAAK) the composition is skewed to basic and acidic residues.

It belongs to the NusB family.

In terms of biological role, involved in transcription antitermination. Required for transcription of ribosomal RNA (rRNA) genes. Binds specifically to the boxA antiterminator sequence of the ribosomal RNA (rrn) operons. The chain is Transcription antitermination protein NusB from Pseudomonas savastanoi pv. phaseolicola (strain 1448A / Race 6) (Pseudomonas syringae pv. phaseolicola (strain 1448A / Race 6)).